The chain runs to 680 residues: Methionine--tRNA ligase (680 aa).

Positions proline 15–histidine 25 match the 'HIGH' region motif. 4 residues coordinate Zn(2+): cysteine 147, cysteine 150, cysteine 160, and cysteine 163. The short motif at lysine 332 to serine 336 is the 'KMSKS' region element. Residue threonine 335 participates in ATP binding. Residues glutamate 578–lysine 680 enclose the tRNA-binding domain.

The protein belongs to the class-I aminoacyl-tRNA synthetase family. MetG type 1 subfamily. Homodimer. Requires Zn(2+) as cofactor.

The protein resides in the cytoplasm. It carries out the reaction tRNA(Met) + L-methionine + ATP = L-methionyl-tRNA(Met) + AMP + diphosphate. Is required not only for elongation of protein synthesis but also for the initiation of all mRNA translation through initiator tRNA(fMet) aminoacylation. The polypeptide is Methionine--tRNA ligase (Phocaeicola vulgatus (strain ATCC 8482 / DSM 1447 / JCM 5826 / CCUG 4940 / NBRC 14291 / NCTC 11154) (Bacteroides vulgatus)).